A 110-amino-acid polypeptide reads, in one-letter code: Transcription factor S (110 aa).

C4, C7, C22, C25, C71, C74, C99, and C102 together coordinate Zn(2+). The C4-type zinc-finger motif lies at C4 to C25. The TFIIS-type zinc finger occupies T67–R107.

It belongs to the archaeal RpoM/eukaryotic RPA12/RPB9/RPC11 RNA polymerase family.

In terms of biological role, induces RNA cleavage activity in the RNA polymerase. In its presence, the cleavage activity of the RNA polymerase truncates the RNA back to position +15 in a stepwise manner by releasing mainly dinucleotides from the 3'-end of the nascent RNA. The truncated RNAs are able to continue elongation. Involved in transcriptional proofreading and fidelity. Misincorporation of nucleotides during elongation of transcription leads to arrested elongation complexes which are rescued by TFS-promoted removal of a dinucleotide from the 3'-end. TFS is able to induce a cleavage resynthesis cycle in stalled elongation complexes (resulting from the next missing nucleotide or a reduced incorporation rate of a wrong nucleotide) preventing misincorporation and enabling proofreading in a post-incorporation manner. Pausing of elongation complexes is the main determinant of TFS-induced RNA cleavage. This Thermococcus celer protein is Transcription factor S.